A 70-amino-acid polypeptide reads, in one-letter code: Small ribosomal subunit protein bS21B (70 aa).

The protein belongs to the bacterial ribosomal protein bS21 family.

The polypeptide is Small ribosomal subunit protein bS21B (rpsU2) (Rhizobium meliloti (strain 1021) (Ensifer meliloti)).